Here is a 393-residue protein sequence, read N- to C-terminus: Endoglucanase 1 (393 aa).

An N-terminal signal peptide occupies residues Met1–Ala26. Asp34 (nucleophile) is an active-site residue. Asp152 serves as the catalytic Proton donor. The disordered stretch occupies residues Gly233–His393. Composition is skewed to low complexity over residues Gln319–Gly329 and Asp337–Ala370. Asn343 carries N-linked (GlcNAc...) asparagine glycosylation. The span at Ala371–Gly384 shows a compositional bias: gly residues.

This sequence belongs to the glycosyl hydrolase 45 (cellulase K) family. May also be O-glycosylated. As to expression, hyphal tip.

The protein localises to the secreted. The enzyme catalyses Endohydrolysis of (1-&gt;4)-beta-D-glucosidic linkages in cellulose, lichenin and cereal beta-D-glucans.. The protein is Endoglucanase 1 (EGL1) of Mycosarcoma maydis (Corn smut fungus).